A 245-amino-acid chain; its full sequence is Cypemycin N-terminal methyltransferase (245 aa).

It belongs to the methyltransferase superfamily.

The enzyme catalyses N-terminal L-alanyl-[cypemycin] + 2 S-adenosyl-L-methionine = N-terminal N,N-dimethyl-L-alanyl-[cypemycin] + 2 S-adenosyl-L-homocysteine + 3 H(+). In terms of biological role, involved in the biosynthesis of the lanaridin cypemycin. The enzyme can methylate a variety of oligopeptides, cyclic peptides and the epsilon-amino group of lysine. This chain is Cypemycin N-terminal methyltransferase, found in Streptomyces sp.